We begin with the raw amino-acid sequence, 88 residues long: Large ribosomal subunit protein eL34 (88 aa).

It belongs to the eukaryotic ribosomal protein eL34 family.

In Saccharolobus solfataricus (strain ATCC 35092 / DSM 1617 / JCM 11322 / P2) (Sulfolobus solfataricus), this protein is Large ribosomal subunit protein eL34.